A 114-amino-acid chain; its full sequence is Large ribosomal subunit protein uL22 (114 aa).

This sequence belongs to the universal ribosomal protein uL22 family. In terms of assembly, part of the 50S ribosomal subunit.

This protein binds specifically to 23S rRNA; its binding is stimulated by other ribosomal proteins, e.g. L4, L17, and L20. It is important during the early stages of 50S assembly. It makes multiple contacts with different domains of the 23S rRNA in the assembled 50S subunit and ribosome. Its function is as follows. The globular domain of the protein is located near the polypeptide exit tunnel on the outside of the subunit, while an extended beta-hairpin is found that lines the wall of the exit tunnel in the center of the 70S ribosome. The polypeptide is Large ribosomal subunit protein uL22 (Alcanivorax borkumensis (strain ATCC 700651 / DSM 11573 / NCIMB 13689 / SK2)).